A 190-amino-acid polypeptide reads, in one-letter code: Probable calcium-binding protein CML27 (190 aa).

EF-hand domains follow at residues 27–62, 115–150, and 153–188; these read LNAL…LGLG, DDEG…LGLP, and RNLA…ITVW. Residues Asp40, Asn42, Asp44, Glu46, Glu51, Asp128, Asp130, Asp132, Glu139, Asp166, Asp168, Asp170, Arg172, and Glu177 each contribute to the Ca(2+) site.

In terms of biological role, potential calcium sensor. This is Probable calcium-binding protein CML27 (CML27) from Oryza sativa subsp. japonica (Rice).